Reading from the N-terminus, the 628-residue chain is E3 SUMO-protein ligase PIAS3 (628 aa).

An interaction with CCAR2 region spans residues 1–200; the sequence is MAELGELKHM…QLRFCLCETS (200 aa). In terms of domain architecture, SAP spans 11–45; that stretch reads VMSFRVSELQVLLGFAGRNKSGRKHELLAKALHLL. The LXXLL motif signature appears at 19-23; that stretch reads LQVLL. Glycyl lysine isopeptide (Lys-Gly) (interchain with G-Cter in SUMO2) cross-links involve residues Lys-46, Lys-56, Lys-230, and Lys-307. One can recognise a PINIT domain in the interval 115–280; that stretch reads MHPPLPQPVH…SLSVYLVRQL (166 aa). The SP-RING-type zinc-finger motif lies at 312-393; sequence PDSEVATTSL…FMEILNSCSD (82 aa). The Zn(2+) site is built by Cys-343, His-345, Cys-366, and Cys-369. Positions 450–460 are SUMO1-binding; it reads LTIESSSDEED. Residues Lys-466 and Lys-482 each participate in a glycyl lysine isopeptide (Lys-Gly) (interchain with G-Cter in SUMO2) cross-link. Residues 571–628 form a disordered region; sequence GPLAPTLGSSHRSSTPAPPPGRVSSIVAPGSSLREGHGGPLPSGPSLTGCRSDVISLD.

It belongs to the PIAS family. As to quaternary structure, monomer. Interacts with PLAG1 and ZFHX3. Interacts with STAT5A; the interaction occurs on stimulation by PRL. Binds SUMO1 and UBE2I. Interacts with AR, BCL11A, HMGA2, IRF1 and NCOA2. Interacts with MITF; the interaction inhibits the transcriptional activity of MITF. Interacts with STAT3; the interaction occurs on stimulation by IL6, CNTF or OSM and inhibits the DNA binding activity of STAT3. Interacts with GFI1; the interaction relieves the inhibitory effect of PIAS3 on STAT3-mediated transcriptional activity. Interacts with MTA1. Interacts with CCAR2 (via N-terminus). Interacts with TRIM8. Interacts with PRDM1. Sumoylated. In terms of tissue distribution, expressed in kidney, heart, spleen, brain and cerebellum; weak expression, if any, in liver and lung.

It localises to the cytoplasm. The protein localises to the nucleus. Its subcellular location is the nucleus speckle. It functions in the pathway protein modification; protein sumoylation. In terms of biological role, functions as an E3-type small ubiquitin-like modifier (SUMO) ligase, stabilizing the interaction between UBE2I and the substrate, and as a SUMO-tethering factor. Plays a crucial role as a transcriptional coregulation in various cellular pathways, including the STAT pathway and the steroid hormone signaling pathway. Repressor of STAT3 signaling via inhibiting STAT3 DNA-binding and suppressing cell growth. Repressor of MITF transcriptional activity. Enhances the sumoylation of MTA1 and may participate in its paralog-selective sumoylation. Sumoylates CCAR2 which promotes its interaction with SIRT1. Diminishes the sumoylation of ZFHX3 by preventing the colocalization of ZFHX3 with SUMO1 in the nucleus. This chain is E3 SUMO-protein ligase PIAS3 (Pias3), found in Mus musculus (Mouse).